A 492-amino-acid polypeptide reads, in one-letter code: JmjC domain-containing histone demethylation protein 1 (492 aa).

A PHD-type; atypical zinc finger spans residues 4-72 (PNICQHCQLK…SYRCPNHKEG (69 aa)). The JmjC domain occupies 254–409 (TAVRQNDLVD…THLKIVEIEK (156 aa)). T302 serves as a coordination point for substrate. Fe cation contacts are provided by H305 and D307. K322 is a substrate binding site. H377 serves as a coordination point for Fe cation.

It belongs to the JHDM1 histone demethylase family. It depends on Fe(2+) as a cofactor.

The protein resides in the nucleus. It catalyses the reaction N(6),N(6)-dimethyl-L-lysyl(36)-[histone H3] + 2 2-oxoglutarate + 2 O2 = L-lysyl(36)-[histone H3] + 2 formaldehyde + 2 succinate + 2 CO2. Functionally, histone demethylase that specifically demethylates 'Lys-36' of histone H3, thereby playing a central role in histone code. Does not demethylate H3 'Lys-4' nor 'Lys-79'. The sequence is that of JmjC domain-containing histone demethylation protein 1 (JHD1) from Saccharomyces cerevisiae (strain ATCC 204508 / S288c) (Baker's yeast).